A 410-amino-acid chain; its full sequence is uncharacterized protein (410 aa).

His-87 contributes to the Zn(2+) binding site. Asp-89 is an active-site residue. A Zn(2+)-binding site is contributed by Asp-120. The active-site Proton acceptor is the Glu-154. Zn(2+) contacts are provided by Glu-155, Asp-184, and His-387.

The protein belongs to the peptidase M20A family. Zn(2+) serves as cofactor. Requires Co(2+) as cofactor.

This is an uncharacterized protein from Methanocaldococcus jannaschii (strain ATCC 43067 / DSM 2661 / JAL-1 / JCM 10045 / NBRC 100440) (Methanococcus jannaschii).